Here is a 146-residue protein sequence, read N- to C-terminus: Hemoglobin subunit beta (146 aa).

Position 1 is an N-acetylvaline (valine 1). The Globin domain maps to 2–146; that stretch reads HLTPEEKTAV…VANALAHKYH (145 aa). At threonine 12 the chain carries Phosphothreonine. Serine 44 is subject to Phosphoserine. The residue at position 59 (lysine 59) is an N6-acetyllysine. Histidine 63 lines the heme b pocket. Position 82 is an N6-acetyllysine (lysine 82). Residue histidine 92 participates in heme b binding. S-nitrosocysteine is present on cysteine 93. An N6-acetyllysine modification is found at lysine 144.

It belongs to the globin family. In terms of assembly, heterotetramer of two alpha chains and two beta chains. As to expression, red blood cells.

Its function is as follows. Involved in oxygen transport from the lung to the various peripheral tissues. This chain is Hemoglobin subunit beta (HBB), found in Mandrillus sphinx (Mandrill).